The chain runs to 217 residues: Ribonuclease T (217 aa).

An Exonuclease domain is found at 20-195; that stretch reads VVVDVETAGL…YDTERTAMLF (176 aa). Mg(2+)-binding residues include Asp-23, Glu-25, His-182, and Asp-187. The active-site Proton donor/acceptor is the His-182.

It belongs to the RNase T family. In terms of assembly, homodimer. The cofactor is Mg(2+).

Functionally, trims short 3' overhangs of a variety of RNA species, leaving a one or two nucleotide 3' overhang. Responsible for the end-turnover of tRNA: specifically removes the terminal AMP residue from uncharged tRNA (tRNA-C-C-A). Also appears to be involved in tRNA biosynthesis. The chain is Ribonuclease T from Blochmanniella pennsylvanica (strain BPEN).